Reading from the N-terminus, the 262-residue chain is Hydroxyethylthiazole kinase (262 aa).

Residue Met50 coordinates substrate. 2 residues coordinate ATP: Arg125 and Thr171. Gly198 contributes to the substrate binding site.

This sequence belongs to the Thz kinase family. Mg(2+) is required as a cofactor.

The catalysed reaction is 5-(2-hydroxyethyl)-4-methylthiazole + ATP = 4-methyl-5-(2-phosphooxyethyl)-thiazole + ADP + H(+). Its pathway is cofactor biosynthesis; thiamine diphosphate biosynthesis; 4-methyl-5-(2-phosphoethyl)-thiazole from 5-(2-hydroxyethyl)-4-methylthiazole: step 1/1. Functionally, catalyzes the phosphorylation of the hydroxyl group of 4-methyl-5-beta-hydroxyethylthiazole (THZ). The protein is Hydroxyethylthiazole kinase of Escherichia fergusonii (strain ATCC 35469 / DSM 13698 / CCUG 18766 / IAM 14443 / JCM 21226 / LMG 7866 / NBRC 102419 / NCTC 12128 / CDC 0568-73).